Reading from the N-terminus, the 483-residue chain is Probable serine incorporator (483 aa).

The next 11 membrane-spanning stretches (helical) occupy residues 43-63 (STRI…WIML), 109-129 (IMFS…GVSS), 146-166 (LILL…FFIG), 169-189 (WSWI…ILLV), 218-238 (ISAT…MFHF), 249-269 (FFIG…MLPS), 274-294 (LPSS…YLVW), 295-315 (SAVS…PLFL), 338-358 (AGTN…SVAY), 414-434 (YSWS…MMVL), and 457-477 (VVSS…PVCL).

The protein belongs to the TDE1 family.

It localises to the endoplasmic reticulum membrane. Functionally, enhances the incorporation of serine into phosphatidylserine and sphingolipids. This Monosiga brevicollis (Choanoflagellate) protein is Probable serine incorporator (serinc).